The primary structure comprises 353 residues: Terpene synthase 3 (353 aa).

Mg(2+)-binding residues include Asp-118, Asn-261, and Glu-269. Residues 118 to 122 (DDLLE) carry the D(D/E)XX(D/E) motif motif. Residues 261–269 (NDTFLLKKE) carry the NSE motif motif. The WxxxxxRY motif signature appears at 342–349 (WCSKTTRY).

This sequence belongs to the terpene synthase family. It depends on Mg(2+) as a cofactor.

In terms of biological role, terpene synthase that may be involved in the production of volatile terpenoids. Does not show detectable terpene products with either farnesyl diphosphate (FPP) or geranyl diphosphate (GPP). P.polycephalum has a unique biology and these volatile terpenoids could function in internal communication of P.polycephalum, to mark the territory that have been explored, or they may be involved in chemotaxis. The sequence is that of Terpene synthase 3 from Physarum polycephalum (Slime mold).